A 565-amino-acid chain; its full sequence is Ubiquitin carboxyl-terminal hydrolase 39 (565 aa).

Basic and acidic residues-rich tracts occupy residues 1–21 (MSGR…ESES) and 28–39 (VKRERDREREPE). Disordered stretches follow at residues 1–61 (MSGR…SARE) and 75–95 (EREV…NGRV). Serine 46 is subject to Phosphoserine. Lysine 51 is covalently cross-linked (Glycyl lysine isopeptide (Lys-Gly) (interchain with G-Cter in SUMO2)). Serine 82 bears the Phosphoserine mark. Basic and acidic residues predominate over residues 85 to 95 (EREVRAKNGRV). A UBP-type; degenerate zinc finger spans residues 103–200 (RHCPYLDTIN…YVLKPTFTKQ (98 aa)). 4 residues coordinate Zn(2+): cysteine 136, cysteine 139, histidine 155, and histidine 161. The region spanning 225–555 (VGLNNIKAND…EAYIQIWKRR (331 aa)) is the USP domain.

It belongs to the peptidase C19 family. The U4/U6-U5 tri-snRNP complex is a building block of the precatalytic spliceosome (spliceosome B complex). Component of the U4/U6-U5 tri-snRNP complex composed of the U4, U6 and U5 snRNAs and at least PRPF3, PRPF4, PRPF6, PRPF8, PRPF31, SNRNP200, TXNL4A, SNRNP40, SNRPB, SNRPD1, SNRPD2, SNRPD3, SNRPE, SNRPF, SNRPG, DDX23, CD2BP2, PPIH, SNU13, EFTUD2, SART1 and USP39, plus LSM2, LSM3, LSM4, LSM5, LSM6, LSM7 and LSM8.

The protein localises to the nucleus. It catalyses the reaction Thiol-dependent hydrolysis of ester, thioester, amide, peptide and isopeptide bonds formed by the C-terminal Gly of ubiquitin (a 76-residue protein attached to proteins as an intracellular targeting signal).. Its function is as follows. Deubiquitinating enzyme that plays a role in many cellular processes including cellular antiviral response, epithelial morphogenesis, DNA repair or B-cell development. Plays a role in pre-mRNA splicing as a component of the U4/U6-U5 tri-snRNP, one of the building blocks of the precatalytic spliceosome. Specifically regulates immunoglobulin gene rearrangement in a spliceosome-dependent manner, which involves modulating chromatin interactions at the Igh locus and therefore plays an essential role in B-cell development. Regulates AURKB mRNA levels, and thereby plays a role in cytokinesis and in the spindle checkpoint. Regulates apoptosis and G2/M cell cycle checkpoint in response to DNA damage by deubiquitinating and stabilizing CHK2. Also plays an important role in DNA repair by controlling the recruitment of XRCC4/LIG4 to DNA double-strand breaks for non-homologous end-joining repair. Participates in antiviral activity by affecting the type I IFN signaling by stabilizing STAT1 and decreasing its 'Lys-6'-linked ubiquitination. Contributes to non-canonical Wnt signaling during epidermal differentiation. Acts as a negative regulator NF-kappa-B activation through deubiquitination of 'Lys-48'-linked ubiquitination of NFKBIA. The protein is Ubiquitin carboxyl-terminal hydrolase 39 of Homo sapiens (Human).